A 991-amino-acid chain; its full sequence is Pentatricopeptide repeat-containing protein At1g73710 (991 aa).

Disordered stretches follow at residues 1–27 (MLQP…HHHH) and 61–81 (SSSS…RKRK). Basic residues predominate over residues 15–27 (VRHHHHHHHHHHH). Residues 61–73 (SSSSVSPPRCSKP) are compositionally biased toward low complexity. PPR repeat units follow at residues 144–178 (NVIH…GVLP), 179–213 (TNNT…MHFP), 214–248 (DEVT…KVDL), 304–338 (LTST…GVPI), 339–373 (DTVT…GISP), 374–408 (DTKT…GLFP), 409–443 (DTVT…SIRI), 444–474 (DEHS…FQLD), 478–513 (SSTT…GQRN), 514–548 (DVLE…GTWP), 549–583 (DECT…GCKP), 584–618 (GCKT…GVKP), 619–653 (NEVV…GVQS), 654–688 (NHIV…EGGP), 689–719 (DVAA…LREK), 723–757 (DVIS…GLLS), 758–792 (DCTS…RKLL), 862–896 (EHFA…GLEP), and 897–931 (DIVT…ELEP). Basic and acidic residues predominate over residues 965 to 974 (AERECSSRSG). The disordered stretch occupies residues 965 to 991 (AERECSSRSGEEEEDDEEENSEEDEAF). Acidic residues predominate over residues 975–991 (EEEEDDEEENSEEDEAF).

This sequence belongs to the PPR family. P subfamily.

This Arabidopsis thaliana (Mouse-ear cress) protein is Pentatricopeptide repeat-containing protein At1g73710.